Reading from the N-terminus, the 150-residue chain is Aspartate 1-decarboxylase 1 (150 aa).

Ser-24 acts as the Schiff-base intermediate with substrate; via pyruvic acid in catalysis. Ser-24 is modified (pyruvic acid (Ser)). Thr-56 is a binding site for substrate. Tyr-57 (proton donor) is an active-site residue. Gly-72 to Ala-74 is a binding site for substrate.

This sequence belongs to the PanD family. As to quaternary structure, heterooctamer of four alpha and four beta subunits. Pyruvate serves as cofactor. Post-translationally, is synthesized initially as an inactive proenzyme, which is activated by self-cleavage at a specific serine bond to produce a beta-subunit with a hydroxyl group at its C-terminus and an alpha-subunit with a pyruvoyl group at its N-terminus.

It is found in the cytoplasm. The catalysed reaction is L-aspartate + H(+) = beta-alanine + CO2. The protein operates within cofactor biosynthesis; (R)-pantothenate biosynthesis; beta-alanine from L-aspartate: step 1/1. Catalyzes the pyruvoyl-dependent decarboxylation of aspartate to produce beta-alanine. This is Aspartate 1-decarboxylase 1 from Mesorhizobium japonicum (strain LMG 29417 / CECT 9101 / MAFF 303099) (Mesorhizobium loti (strain MAFF 303099)).